Reading from the N-terminus, the 169-residue chain is Large ribosomal subunit protein uL10 (169 aa).

It belongs to the universal ribosomal protein uL10 family. As to quaternary structure, part of the ribosomal stalk of the 50S ribosomal subunit. The N-terminus interacts with L11 and the large rRNA to form the base of the stalk. The C-terminus forms an elongated spine to which L12 dimers bind in a sequential fashion forming a multimeric L10(L12)X complex.

In terms of biological role, forms part of the ribosomal stalk, playing a central role in the interaction of the ribosome with GTP-bound translation factors. This is Large ribosomal subunit protein uL10 from Rickettsia africae (strain ESF-5).